The sequence spans 78 residues: Cytochrome c oxidase subunit 6b-3 (78 aa).

A CHCH domain is found at 22 to 65 (TRHCFTRYIEFHRCTTAKGEDANECERFAKYYRALCPGEWVDKW). The Cx9C motif signature appears at 25–35 (CFTRYIEFHRC). Disulfide bonds link cysteine 25-cysteine 57 and cysteine 35-cysteine 46. Positions 46 to 57 (CERFAKYYRALC) match the Cx10C motif motif.

The protein belongs to the cytochrome c oxidase subunit 6B (TC 3.D.4.8) family. As to expression, expressed in the whole plant.

Its subcellular location is the mitochondrion. In terms of biological role, this protein is one of the nuclear-coded polypeptide chains of cytochrome c oxidase, the terminal oxidase in mitochondrial electron transport. This protein may be one of the heme-binding subunits of the oxidase. This chain is Cytochrome c oxidase subunit 6b-3 (COX6B-3), found in Arabidopsis thaliana (Mouse-ear cress).